Reading from the N-terminus, the 268-residue chain is tRNA pseudouridine synthase A (268 aa).

D52 acts as the Nucleophile in catalysis. Y110 lines the substrate pocket.

The protein belongs to the tRNA pseudouridine synthase TruA family. Homodimer.

The enzyme catalyses uridine(38/39/40) in tRNA = pseudouridine(38/39/40) in tRNA. Formation of pseudouridine at positions 38, 39 and 40 in the anticodon stem and loop of transfer RNAs. The polypeptide is tRNA pseudouridine synthase A (Prochlorococcus marinus (strain MIT 9301)).